A 252-amino-acid polypeptide reads, in one-letter code: tRNA (guanine-N(1)-)-methyltransferase (252 aa).

S-adenosyl-L-methionine contacts are provided by residues glycine 118 and 138-143 (IGDYVL).

This sequence belongs to the RNA methyltransferase TrmD family. As to quaternary structure, homodimer.

The protein localises to the cytoplasm. The catalysed reaction is guanosine(37) in tRNA + S-adenosyl-L-methionine = N(1)-methylguanosine(37) in tRNA + S-adenosyl-L-homocysteine + H(+). Its function is as follows. Specifically methylates guanosine-37 in various tRNAs. This Pseudomonas aeruginosa (strain UCBPP-PA14) protein is tRNA (guanine-N(1)-)-methyltransferase.